The following is a 295-amino-acid chain: 4-diphosphocytidyl-2-C-methyl-D-erythritol kinase (295 aa).

The active site involves lysine 18. 101–111 (PMGGGIGGGSS) provides a ligand contact to ATP. Residue aspartate 143 is part of the active site.

The protein belongs to the GHMP kinase family. IspE subfamily.

The enzyme catalyses 4-CDP-2-C-methyl-D-erythritol + ATP = 4-CDP-2-C-methyl-D-erythritol 2-phosphate + ADP + H(+). The protein operates within isoprenoid biosynthesis; isopentenyl diphosphate biosynthesis via DXP pathway; isopentenyl diphosphate from 1-deoxy-D-xylulose 5-phosphate: step 3/6. Catalyzes the phosphorylation of the position 2 hydroxy group of 4-diphosphocytidyl-2C-methyl-D-erythritol. This chain is 4-diphosphocytidyl-2-C-methyl-D-erythritol kinase, found in Vibrio vulnificus (strain YJ016).